Reading from the N-terminus, the 557-residue chain is Formate--tetrahydrofolate ligase (557 aa).

67 to 74 (TPAGEGKT) is a binding site for ATP.

Belongs to the formate--tetrahydrofolate ligase family.

The catalysed reaction is (6S)-5,6,7,8-tetrahydrofolate + formate + ATP = (6R)-10-formyltetrahydrofolate + ADP + phosphate. It functions in the pathway one-carbon metabolism; tetrahydrofolate interconversion. This chain is Formate--tetrahydrofolate ligase, found in Cereibacter sphaeroides (strain ATCC 17029 / ATH 2.4.9) (Rhodobacter sphaeroides).